Reading from the N-terminus, the 196-residue chain is MTTILRIDSSIKGEAAVSRRLTQRILDRLLEAHPDATVVSRDLAQGIRQIDGPWLGSVFTAPEQRTADQQEIARTAGAVMAEVKEADILVIALPVYNFGAPAQLKSWVDHIARRGESFVYTETGPVGLLTGKRAIVAFTSDGTPLGSELDHASGWLRQVLGFVGITDVDFVAADRMVFGADEAMARAEAAVAALAA.

Ser-10 lines the FMN pocket.

Belongs to the azoreductase type 1 family. Homodimer. FMN serves as cofactor.

It catalyses the reaction 2 a quinone + NADH + H(+) = 2 a 1,4-benzosemiquinone + NAD(+). The enzyme catalyses N,N-dimethyl-1,4-phenylenediamine + anthranilate + 2 NAD(+) = 2-(4-dimethylaminophenyl)diazenylbenzoate + 2 NADH + 2 H(+). Quinone reductase that provides resistance to thiol-specific stress caused by electrophilic quinones. Functionally, also exhibits azoreductase activity. Catalyzes the reductive cleavage of the azo bond in aromatic azo compounds to the corresponding amines. The polypeptide is FMN-dependent NADH:quinone oxidoreductase (Cereibacter sphaeroides (strain ATCC 17023 / DSM 158 / JCM 6121 / CCUG 31486 / LMG 2827 / NBRC 12203 / NCIMB 8253 / ATH 2.4.1.) (Rhodobacter sphaeroides)).